Reading from the N-terminus, the 93-residue chain is Aspartyl/glutamyl-tRNA(Asn/Gln) amidotransferase subunit C (93 aa).

It belongs to the GatC family. In terms of assembly, heterotrimer of A, B and C subunits.

The catalysed reaction is L-glutamyl-tRNA(Gln) + L-glutamine + ATP + H2O = L-glutaminyl-tRNA(Gln) + L-glutamate + ADP + phosphate + H(+). The enzyme catalyses L-aspartyl-tRNA(Asn) + L-glutamine + ATP + H2O = L-asparaginyl-tRNA(Asn) + L-glutamate + ADP + phosphate + 2 H(+). Functionally, allows the formation of correctly charged Asn-tRNA(Asn) or Gln-tRNA(Gln) through the transamidation of misacylated Asp-tRNA(Asn) or Glu-tRNA(Gln) in organisms which lack either or both of asparaginyl-tRNA or glutaminyl-tRNA synthetases. The reaction takes place in the presence of glutamine and ATP through an activated phospho-Asp-tRNA(Asn) or phospho-Glu-tRNA(Gln). This Nautilia profundicola (strain ATCC BAA-1463 / DSM 18972 / AmH) protein is Aspartyl/glutamyl-tRNA(Asn/Gln) amidotransferase subunit C.